Consider the following 257-residue polypeptide: Caspase-14 (257 aa).

Catalysis depends on residues histidine 93 and cysteine 136. Positions 156-167 (DEELGGDEVAVL) are excised as a propeptide.

This sequence belongs to the peptidase C14A family. As to quaternary structure, heterodimer of a large and a small subunit, both processed from the precursor; the mature active form is a p17/p10 dimer and the intermediate form a p20/p8 dimer. In terms of processing, maturation by proteolytic processing appears to be a two-step process. The precursor is processed by KLK7 to yield the p20/p8 intermediate form which acts the precursor to yield the p17/p10 mature form. Initially it was reported that cleavage by granzyme B, caspase-8 and -10 generates the two active subunits, however the physiological relevance has not been established. As to expression, embryo, adult liver and less in adult brain and kidney. Expressed in differentiating keratinocytes of embryonic skin (at protein level). Expressed in keratinocytes of adult skin suprabasal layers (at protein level).

Its subcellular location is the cytoplasm. The protein resides in the nucleus. Functionally, non-apoptotic caspase which is involved in epidermal differentiation. Seems to play a role in keratinocyte differentiation and is required for cornification. Regulates maturation of the epidermis by proteolytically processing filaggrin. In vitro is equally active on the synthetic caspase substrates WEHD-ACF and IETD-AFC. Involved in processing of prosaposin in the epidermis. May be involved in retinal pigment epithelium cell barrier function. The polypeptide is Caspase-14 (Casp14) (Mus musculus (Mouse)).